The chain runs to 341 residues: tRNA (guanine-N(7)-)-methyltransferase (341 aa).

4 residues coordinate S-adenosyl-L-methionine: Glu75, Glu100, Asp127, and Asp150. Residue Asp150 is part of the active site. Residue Lys154 participates in substrate binding. The tract at residues 156-161 is interaction with RNA; that stretch reads RHNKRR. Asp186 is a binding site for substrate.

Belongs to the class I-like SAM-binding methyltransferase superfamily. TrmB family.

The enzyme catalyses guanosine(46) in tRNA + S-adenosyl-L-methionine = N(7)-methylguanosine(46) in tRNA + S-adenosyl-L-homocysteine. The protein operates within tRNA modification; N(7)-methylguanine-tRNA biosynthesis. Its function is as follows. Catalyzes the formation of N(7)-methylguanine at position 46 (m7G46) in tRNA. This is tRNA (guanine-N(7)-)-methyltransferase from Xanthomonas euvesicatoria pv. vesicatoria (strain 85-10) (Xanthomonas campestris pv. vesicatoria).